A 285-amino-acid polypeptide reads, in one-letter code: Putative hydrolase DDAH2 (285 aa).

H171 acts as the Proton donor in catalysis. The active-site Nucleophile is C276.

It belongs to the DDAH family. Phosphorylated by TBK1. Phosphorylation inhibits the translocation into the mitochondrion upon Sendai viral infection.

It localises to the cytoplasm. Its subcellular location is the mitochondrion. Putative hydrolase with unknown substrate. Does not hydrolyze N(G),N(G)-dimethyl-L-arginine (ADMA) which acts as an inhibitor of NOS. In endothelial cells, induces expression of vascular endothelial growth factor (VEGF) via phosphorylation of the transcription factor SP1 by PKA in a process that is independent of NO and NO synthase. Similarly, enhances pancreatic insulin secretion through SP1-mediated transcriptional up-regulation of secretagogin/SCGN, an insulin vesicle docking protein. Upon viral infection, relocates to mitochondria where it promotes mitochondrial fission through activation of DNM1L leading to the inhibition of innate response activation mediated by MAVS. In Bos taurus (Bovine), this protein is Putative hydrolase DDAH2 (DDAH2).